A 441-amino-acid chain; its full sequence is MREIVHIQAGQCGNQIGAKFWEVISDEHGIDQSGTYHGDSDLQLERIDVFYNEATGGRYVPRAVLMDLEPGTMDSVRAGPFGQLFRPDNFVFGQTGAGNNWAKGHYTEGAELIDSVLDVVRKEAEGCDCLQGFQITHSLGGGTGSGMGTLLISKIREEYPDRIMETFSVFPSPKVSDTVVEPYNATLSVHQLVENADEVQVIDNEALYDICFRTLKLTTPTYGDLNHLVSAAMSGVTCSLRFPGQLNSDLRKLAVNLIPFPRLHFFMIGFAPLTSRGSQQHRALSVAELTQQMFDAKNMMCASDPRRGRYLTACAMFRGRMSTKEVDEQMSMVQNKNSSYFVEWIPHNTKSSVCDIPPKGLKMAVTFVGNSTAIQDMFKRVSEQFTAMFRRKAFLHWYTGEGMDEMEFTEAESNMNDLVSEYQQYQEATIDDDADDMVNDY.

GTP contacts are provided by Gln-11, Glu-69, Ser-138, Gly-142, Thr-143, Gly-144, Asn-204, and Asn-226. Glu-69 contacts Mg(2+).

The protein belongs to the tubulin family. Dimer of alpha and beta chains. A typical microtubule is a hollow water-filled tube with an outer diameter of 25 nm and an inner diameter of 15 nM. Alpha-beta heterodimers associate head-to-tail to form protofilaments running lengthwise along the microtubule wall with the beta-tubulin subunit facing the microtubule plus end conferring a structural polarity. Microtubules usually have 13 protofilaments but different protofilament numbers can be found in some organisms and specialized cells. The cofactor is Mg(2+).

The protein localises to the cytoplasm. Its subcellular location is the cytoskeleton. In terms of biological role, tubulin is the major constituent of microtubules, a cylinder consisting of laterally associated linear protofilaments composed of alpha- and beta-tubulin heterodimers. Microtubules grow by the addition of GTP-tubulin dimers to the microtubule end, where a stabilizing cap forms. Below the cap, tubulin dimers are in GDP-bound state, owing to GTPase activity of alpha-tubulin. This Babesia bovis protein is Tubulin beta chain.